A 168-amino-acid chain; its full sequence is uncharacterized protein (168 aa).

Positions M1–E15 are enriched in basic and acidic residues. A disordered region spans residues M1–P36.

Its subcellular location is the cytoplasm. This is an uncharacterized protein from Saccharomyces cerevisiae (strain ATCC 204508 / S288c) (Baker's yeast).